Reading from the N-terminus, the 481-residue chain is 3-isopropylmalate dehydratase large subunit (481 aa).

Residues C363, C423, and C426 each coordinate [4Fe-4S] cluster. A disordered region spans residues 432-459 (DQLKPGERSASTSNRNFEGRQGPGGRTH).

This sequence belongs to the aconitase/IPM isomerase family. LeuC type 1 subfamily. In terms of assembly, heterodimer of LeuC and LeuD. Requires [4Fe-4S] cluster as cofactor.

The enzyme catalyses (2R,3S)-3-isopropylmalate = (2S)-2-isopropylmalate. It functions in the pathway amino-acid biosynthesis; L-leucine biosynthesis; L-leucine from 3-methyl-2-oxobutanoate: step 2/4. Its function is as follows. Catalyzes the isomerization between 2-isopropylmalate and 3-isopropylmalate, via the formation of 2-isopropylmaleate. This Corynebacterium glutamicum (strain ATCC 13032 / DSM 20300 / JCM 1318 / BCRC 11384 / CCUG 27702 / LMG 3730 / NBRC 12168 / NCIMB 10025 / NRRL B-2784 / 534) protein is 3-isopropylmalate dehydratase large subunit.